The sequence spans 261 residues: Esterase citA (261 aa).

Active-site charge relay system residues include Ser-122, Asp-207, and His-235.

Belongs to the LovG family.

Its pathway is mycotoxin biosynthesis. Functionally, non-reducing polyketide synthase; part of the gene cluster that mediates the biosynthesis of the mycotoxin citrinin, a hepato-nephrotoxic compound to humans due to inhibition of respiration complex III. The pathway begins with the synthesis of a keto-aldehyde intermediate by the citrinin PKS (pksCT also named citS) from successive condensations of 4 malonyl-CoA units, presumably with a simple acetyl-CoA starter unit. Release of the keto-aldehyde intermediate is consistent with the presence of the C-terminal reductive release domain. CitA collaborates with citS by catalyzing the hydrolysis of ACP-bound acyl intermediates to free the ACP from stalled intermediates. CitB then catalyzes the oxidation of the C-12 methyl of the ketone intermediate to an alcohol intermediate which is further oxidized by the oxidoreductase citC to produce a bisaldehyde intermediate. The fourth catalytic step is catalyzed by the citD aldehyde dehydrogenase. The final transformation is the reduction of C-3 by citE to provide the chemically stable citrinin nucleus. CitE appears highly selective for its substrate as its presence in any context other than a full complement of citS and citA-D does not result in observable new compounds. This Monascus ruber (Mold) protein is Esterase citA.